We begin with the raw amino-acid sequence, 416 residues long: MDKLLIFGGLPLKGEVTISGAKNAALPIMASTLLAQGVHIFKRIPKLRDVFTMTELIKRMGGIVEFNELCKINTIKINKFEASYDLVKTMRASILVLGPLVARFGRAKVSLPGGCAIGARPVNLHINGLQKMGAKISLQEGYIIAKASRLMGTKIYFDIPTVTGTENLMMAATLAKGTTIIENAAKEPEIVDLANYLILMGAKIEGAGTSIIKVEGVDELKPPQEYEIIPDRIETGTFIAIAGACGGDISLKGCRIDHIDAIILKMKDAGISFKEIENGIRVIGPKRLQAVDIKTMPYPGFPTDMQAQFMAMMTVANGTSVIKETIFENRFMHVAELRRMGADITVEGNTATIRGVKKLKGAPVMATDLRASASLVIAGLIAEEETLIDRIYHLDRGYEELDKKLIQLGARIQRIK.

22-23 (KN) provides a ligand contact to phosphoenolpyruvate. Arginine 91 is a binding site for UDP-N-acetyl-alpha-D-glucosamine. The active-site Proton donor is the cysteine 115. Cysteine 115 is subject to 2-(S-cysteinyl)pyruvic acid O-phosphothioketal. 2 residues coordinate UDP-N-acetyl-alpha-D-glucosamine: aspartate 304 and isoleucine 326.

The protein belongs to the EPSP synthase family. MurA subfamily.

It localises to the cytoplasm. The enzyme catalyses phosphoenolpyruvate + UDP-N-acetyl-alpha-D-glucosamine = UDP-N-acetyl-3-O-(1-carboxyvinyl)-alpha-D-glucosamine + phosphate. It functions in the pathway cell wall biogenesis; peptidoglycan biosynthesis. In terms of biological role, cell wall formation. Adds enolpyruvyl to UDP-N-acetylglucosamine. The polypeptide is UDP-N-acetylglucosamine 1-carboxyvinyltransferase (Thermodesulfovibrio yellowstonii (strain ATCC 51303 / DSM 11347 / YP87)).